The primary structure comprises 66 residues: Large ribosomal subunit protein bL31 (66 aa).

Residues Cys-16, Cys-18, Cys-36, and Cys-39 each contribute to the Zn(2+) site.

It belongs to the bacterial ribosomal protein bL31 family. Type A subfamily. As to quaternary structure, part of the 50S ribosomal subunit. Zn(2+) is required as a cofactor.

Its function is as follows. Binds the 23S rRNA. The chain is Large ribosomal subunit protein bL31 from Moorella thermoacetica (strain ATCC 39073 / JCM 9320).